The sequence spans 410 residues: Regulator of microtubule dynamics protein 2 (410 aa).

Residues 10-27 (IFGIMVGTAGISLLLLWY) traverse the membrane as a helical segment. Serine 51 carries the phosphoserine modification. A coiled-coil region spans residues 68-110 (FQERQLQILEKLNELLTNMEELKEEIRFLKETVPKLEEYIQDE). A Phosphoserine modification is found at serine 121. Positions 122 to 131 (PQHRARKRRL) are enriched in basic residues. The tract at residues 122 to 151 (PQHRARKRRLPTIQSSATSNSSEEAESEGG) is disordered. Threonine 139 is subject to Phosphothreonine. Tyrosine 152 is modified (phosphotyrosine). A phosphothreonine mark is found at threonine 154 and threonine 157.

Belongs to the RMDN family. In terms of assembly, interacts with microtubules.

It is found in the membrane. Its subcellular location is the cytoplasm. It localises to the cytoskeleton. The protein resides in the spindle. The protein localises to the spindle pole. The protein is Regulator of microtubule dynamics protein 2 (RMDN2) of Macaca fascicularis (Crab-eating macaque).